Here is a 238-residue protein sequence, read N- to C-terminus: Purine nucleoside phosphorylase DeoD-type (238 aa).

His-4 serves as a coordination point for a purine D-ribonucleoside. Phosphate contacts are provided by residues Gly-20, Arg-24, Arg-43, and 87 to 90 (RIGS). A purine D-ribonucleoside-binding positions include 181-183 (EME) and 205-206 (SD). Asp-206 functions as the Proton donor in the catalytic mechanism.

This sequence belongs to the PNP/UDP phosphorylase family. Homohexamer; trimer of homodimers.

It carries out the reaction a purine D-ribonucleoside + phosphate = a purine nucleobase + alpha-D-ribose 1-phosphate. It catalyses the reaction a purine 2'-deoxy-D-ribonucleoside + phosphate = a purine nucleobase + 2-deoxy-alpha-D-ribose 1-phosphate. In terms of biological role, catalyzes the reversible phosphorolytic breakdown of the N-glycosidic bond in the beta-(deoxy)ribonucleoside molecules, with the formation of the corresponding free purine bases and pentose-1-phosphate. This Mycoplasma pneumoniae (strain ATCC 29342 / M129 / Subtype 1) (Mycoplasmoides pneumoniae) protein is Purine nucleoside phosphorylase DeoD-type.